The chain runs to 216 residues: Trimethylamine corrinoid protein 1 (216 aa).

The B12-binding N-terminal domain occupies 1-92 (MANKEEIIAK…EMEKRKSQTK (92 aa)). The region spanning 94–216 (LGTIVIGTIE…VVSKVKAALL (123 aa)) is the B12-binding domain. His107 contacts methylcob(III)alamin.

The protein belongs to the methylamine corrinoid protein family. As to quaternary structure, can form a complex with MttB.

Its pathway is one-carbon metabolism; methanogenesis from trimethylamine. In terms of biological role, acts probably as a methyl group carrier between MttB and either MtbA or MtaA. This Methanosarcina mazei (strain ATCC BAA-159 / DSM 3647 / Goe1 / Go1 / JCM 11833 / OCM 88) (Methanosarcina frisia) protein is Trimethylamine corrinoid protein 1 (mttC1).